The primary structure comprises 66 residues: MFTLKKSLLLLFFLGTISLSLCEEERNAEEERRDYPEERDVEVEKRFLSLALAALPKLFCLIFKKC.

A signal peptide spans 1–22 (MFTLKKSLLLLFFLGTISLSLC). Residues 23–44 (EEERNAEEERRDYPEERDVEVE) constitute a propeptide that is removed on maturation. A disulfide bridge connects residues Cys60 and Cys66.

In terms of tissue distribution, expressed by the skin glands.

The protein resides in the secreted. In terms of biological role, antimicrobial peptide. Has low activity against the Gram-positive bacterium S.aureus and the Gram-negative bacterium E.coli (MIC&lt;15 uM). Has a strong hemolytic activity. The protein is Brevinin-1DYb of Rana dybowskii (Dybovsky's frog).